The following is a 176-amino-acid chain: Large ribosomal subunit protein uL6 (176 aa).

The segment covering 151–170 has biased composition (basic and acidic residues); the sequence is RPPEPYKGKGVRYADEQVRR. Residues 151–176 form a disordered region; that stretch reads RPPEPYKGKGVRYADEQVRRKEAKKK.

This sequence belongs to the universal ribosomal protein uL6 family. As to quaternary structure, part of the 50S ribosomal subunit.

In terms of biological role, this protein binds to the 23S rRNA, and is important in its secondary structure. It is located near the subunit interface in the base of the L7/L12 stalk, and near the tRNA binding site of the peptidyltransferase center. This chain is Large ribosomal subunit protein uL6, found in Shewanella halifaxensis (strain HAW-EB4).